Reading from the N-terminus, the 419-residue chain is UDP-N-acetylglucosamine 1-carboxyvinyltransferase (419 aa).

22 to 23 is a phosphoenolpyruvate binding site; the sequence is KN. Arginine 92 serves as a coordination point for UDP-N-acetyl-alpha-D-glucosamine. The active-site Proton donor is cysteine 116. A 2-(S-cysteinyl)pyruvic acid O-phosphothioketal modification is found at cysteine 116. UDP-N-acetyl-alpha-D-glucosamine contacts are provided by residues 121–125, aspartate 307, and leucine 329; that span reads RPIDL.

It belongs to the EPSP synthase family. MurA subfamily.

It localises to the cytoplasm. It catalyses the reaction phosphoenolpyruvate + UDP-N-acetyl-alpha-D-glucosamine = UDP-N-acetyl-3-O-(1-carboxyvinyl)-alpha-D-glucosamine + phosphate. It functions in the pathway cell wall biogenesis; peptidoglycan biosynthesis. Cell wall formation. Adds enolpyruvyl to UDP-N-acetylglucosamine. The protein is UDP-N-acetylglucosamine 1-carboxyvinyltransferase of Campylobacter fetus subsp. fetus (strain 82-40).